The chain runs to 300 residues: Movement protein (300 aa).

This sequence belongs to the alfamovirus movement protein family.

Its subcellular location is the host cell junction. It localises to the host plasmodesma. Functionally, transports viral genome to neighboring plant cells directly through plasmosdesmata, without any budding. The movement protein allows efficient cell to cell propagation, by bypassing the host cell wall barrier. Acts by forming a tubular structure at the host plasmodesmata, enlarging it enough to allow free passage of virion capsids. The sequence is that of Movement protein from Alfalfa mosaic virus (AMV).